We begin with the raw amino-acid sequence, 360 residues long: tRNA N6-adenosine threonylcarbamoyltransferase (360 aa).

Positions 111 and 115 each coordinate Fe cation. Substrate-binding positions include 134 to 138, Asp167, Gly180, Asp184, and Asn279; that span reads LVSGG. Residue Asp307 coordinates Fe cation.

It belongs to the KAE1 / TsaD family. It depends on Fe(2+) as a cofactor.

It localises to the cytoplasm. The catalysed reaction is L-threonylcarbamoyladenylate + adenosine(37) in tRNA = N(6)-L-threonylcarbamoyladenosine(37) in tRNA + AMP + H(+). Its function is as follows. Required for the formation of a threonylcarbamoyl group on adenosine at position 37 (t(6)A37) in tRNAs that read codons beginning with adenine. Is involved in the transfer of the threonylcarbamoyl moiety of threonylcarbamoyl-AMP (TC-AMP) to the N6 group of A37, together with TsaE and TsaB. TsaD likely plays a direct catalytic role in this reaction. This is tRNA N6-adenosine threonylcarbamoyltransferase from Acaryochloris marina (strain MBIC 11017).